A 247-amino-acid chain; its full sequence is Sugar fermentation stimulation protein homolog (247 aa).

The protein belongs to the SfsA family.

The protein is Sugar fermentation stimulation protein homolog of Oleidesulfovibrio alaskensis (strain ATCC BAA-1058 / DSM 17464 / G20) (Desulfovibrio alaskensis).